Reading from the N-terminus, the 231-residue chain is Antiholin-like protein LrgB (231 aa).

Transmembrane regions (helical) follow at residues 7–24 (PYFG…GTFL), 34–56 (FTPL…FSYA), 91–113 (WWQI…YLLA), 149–171 (ITAF…FLKV), and 207–229 (ASIA…VQLI).

This sequence belongs to the CidB/LrgB family. LrgB subfamily.

The protein resides in the cell membrane. In terms of biological role, inhibits the expression or activity of extracellular murein hydrolases by interacting, possibly with LrgA, with the holin-like protein CidA. The LrgAB and CidA proteins may affect the proton motive force of the membrane. May be involved in programmed cell death (PCD), possibly triggering PCD in response to antibiotics and environmental stresses. This Bacillus subtilis (strain 168) protein is Antiholin-like protein LrgB.